The primary structure comprises 819 residues: Lon protease (819 aa).

The segment at Met-1–Glu-36 is disordered. The region spanning Leu-43–Leu-240 is the Lon N-terminal domain. Gly-393–Thr-400 serves as a coordination point for ATP. The region spanning Ser-635–Lys-817 is the Lon proteolytic domain. Catalysis depends on residues Ser-723 and Lys-766.

Belongs to the peptidase S16 family. Homohexamer. Organized in a ring with a central cavity.

It is found in the cytoplasm. The enzyme catalyses Hydrolysis of proteins in presence of ATP.. Functionally, ATP-dependent serine protease that mediates the selective degradation of mutant and abnormal proteins as well as certain short-lived regulatory proteins. Required for cellular homeostasis and for survival from DNA damage and developmental changes induced by stress. Degrades polypeptides processively to yield small peptide fragments that are 5 to 10 amino acids long. Binds to DNA in a double-stranded, site-specific manner. This is Lon protease from Chlamydia pneumoniae (Chlamydophila pneumoniae).